Reading from the N-terminus, the 183-residue chain is ARS-binding factor 2, mitochondrial (183 aa).

Residues 1 to 26 (MNSYSLLTRSFHESSKPLFNLASTLL) constitute a mitochondrion transit peptide. DNA-binding regions (HMG box) lie at residues 43–111 (PKRP…KEFD) and 116–183 (PKKP…YPLN).

It localises to the mitochondrion. It is found in the nucleus. Specific binding to the autonomously replicating sequence 1 (ARS1). Interaction with regulatory regions: probably involved in compacting the mitochondrial genome. It might play a positive role in gene expression and replication. This is ARS-binding factor 2, mitochondrial (ABF2) from Saccharomyces cerevisiae (strain ATCC 204508 / S288c) (Baker's yeast).